The following is a 984-amino-acid chain: Detocs histidine-protein kinase DtcA (984 aa).

H645 bears the Phosphohistidine; by autocatalysis mark.

Autophosphorylated.

The catalysed reaction is ATP + protein L-histidine = ADP + protein N-phospho-L-histidine.. In terms of biological role, sensor-kinase member of the two-component regulatory system Detocs that confers resistance to bacteriophage. When the system (DtcA-DtcB-DtcC) is expressed in a susceptible E.coli (strain MG1655) it confers resistance to bacteriophages T2, T4, T5, T6 and SECphi27. Detocs inhibits T5 infection leading to growth arrest but not complete cell lysis, during SECphi27 infection leads to cell lysis. DtcA (this subunit) probably autophosphorylates upon sensing viral infection, and subsequently transfers the phosphate signal to DtcC which activates it, leading to an antiviral defense; DtcB may scavenge phosphorylation signals from accidental activation of DtcA. The sequence is that of Detocs histidine-protein kinase DtcA from Vibrio alginolyticus.